Here is a 175-residue protein sequence, read N- to C-terminus: Epididymal-specific lipocalin-8 (175 aa).

Positions M1–S22 are cleaved as a signal peptide. N-linked (GlcNAc...) asparagine glycosylation is found at N66 and N74. C79 and C166 are joined by a disulfide.

Belongs to the calycin superfamily. Lipocalin family. As to expression, predominantly expressed in epididymis.

The protein resides in the secreted. May play a role in male fertility. May act as a retinoid carrier protein within the epididymis. This chain is Epididymal-specific lipocalin-8 (Lcn8), found in Mus musculus (Mouse).